The chain runs to 90 residues: UPF0213 protein lwe0147 (90 aa).

A GIY-YIG domain is found at 5-83 (NEHFFYVLKC…SRKNKDSYLI (79 aa)).

Belongs to the UPF0213 family.

This is UPF0213 protein lwe0147 from Listeria welshimeri serovar 6b (strain ATCC 35897 / DSM 20650 / CCUG 15529 / CIP 8149 / NCTC 11857 / SLCC 5334 / V8).